The chain runs to 101 residues: Large ribosomal subunit protein uL23 (101 aa).

The protein belongs to the universal ribosomal protein uL23 family. Part of the 50S ribosomal subunit. Contacts protein L29, and trigger factor when it is bound to the ribosome.

Its function is as follows. One of the early assembly proteins it binds 23S rRNA. One of the proteins that surrounds the polypeptide exit tunnel on the outside of the ribosome. Forms the main docking site for trigger factor binding to the ribosome. The chain is Large ribosomal subunit protein uL23 from Micrococcus luteus (strain ATCC 4698 / DSM 20030 / JCM 1464 / CCM 169 / CCUG 5858 / IAM 1056 / NBRC 3333 / NCIMB 9278 / NCTC 2665 / VKM Ac-2230) (Micrococcus lysodeikticus).